The chain runs to 310 residues: Methionyl-tRNA formyltransferase (310 aa).

111–114 (SLLP) provides a ligand contact to (6S)-5,6,7,8-tetrahydrofolate.

It belongs to the Fmt family.

The enzyme catalyses L-methionyl-tRNA(fMet) + (6R)-10-formyltetrahydrofolate = N-formyl-L-methionyl-tRNA(fMet) + (6S)-5,6,7,8-tetrahydrofolate + H(+). Its function is as follows. Attaches a formyl group to the free amino group of methionyl-tRNA(fMet). The formyl group appears to play a dual role in the initiator identity of N-formylmethionyl-tRNA by promoting its recognition by IF2 and preventing the misappropriation of this tRNA by the elongation apparatus. The chain is Methionyl-tRNA formyltransferase from Rhodopseudomonas palustris (strain TIE-1).